Here is a 193-residue protein sequence, read N- to C-terminus: Oligoribonuclease (193 aa).

The Exonuclease domain occupies 20–183; it reads FVWLDCEMTG…ADVHESIEEL (164 aa). Residue Tyr-141 is part of the active site.

The protein belongs to the oligoribonuclease family.

Its subcellular location is the cytoplasm. 3'-to-5' exoribonuclease specific for small oligoribonucleotides. This Paracidovorax citrulli (strain AAC00-1) (Acidovorax citrulli) protein is Oligoribonuclease.